The chain runs to 422 residues: Tyrosine--tRNA ligase 1 (422 aa).

Tyr35 lines the L-tyrosine pocket. The short motif at 40-49 (PTADSLHIGH) is the 'HIGH' region element. Residues Tyr170 and Gln174 each contribute to the L-tyrosine site. Positions 232–236 (KFGKT) match the 'KMSKS' region motif. Residue Lys235 coordinates ATP. The region spanning 355 to 421 (LSLVDVLVQS…GKKKYFLVTY (67 aa)) is the S4 RNA-binding domain.

Belongs to the class-I aminoacyl-tRNA synthetase family. TyrS type 1 subfamily. In terms of assembly, homodimer.

The protein resides in the cytoplasm. It catalyses the reaction tRNA(Tyr) + L-tyrosine + ATP = L-tyrosyl-tRNA(Tyr) + AMP + diphosphate + H(+). Its function is as follows. Catalyzes the attachment of tyrosine to tRNA(Tyr) in a two-step reaction: tyrosine is first activated by ATP to form Tyr-AMP and then transferred to the acceptor end of tRNA(Tyr). This Bacillus subtilis (strain 168) protein is Tyrosine--tRNA ligase 1.